Reading from the N-terminus, the 141-residue chain is Acetyltransferase YpeA (141 aa).

The N-acetyltransferase domain maps to 1 to 141 (MEIRVFRQED…GKRLIEDEEY (141 aa)).

This sequence belongs to the acetyltransferase family. YpeA subfamily.

The protein is Acetyltransferase YpeA (ypeA) of Escherichia coli (strain K12).